A 585-amino-acid polypeptide reads, in one-letter code: Arginine--tRNA ligase (585 aa).

The short motif at 131–141 is the 'HIGH' region element; sequence ANPTGPMHVGH.

This sequence belongs to the class-I aminoacyl-tRNA synthetase family. Monomer.

The protein resides in the cytoplasm. It catalyses the reaction tRNA(Arg) + L-arginine + ATP = L-arginyl-tRNA(Arg) + AMP + diphosphate. The polypeptide is Arginine--tRNA ligase (Bartonella quintana (strain Toulouse) (Rochalimaea quintana)).